A 446-amino-acid chain; its full sequence is Adenylosuccinate synthetase (446 aa).

Residues 12–18 and 40–42 contribute to the GTP site; these read GDEGKGK and GHT. Asp-13 functions as the Proton acceptor in the catalytic mechanism. Mg(2+)-binding residues include Asp-13 and Gly-40. IMP is bound by residues 13-16, 38-41, Thr-128, Arg-142, Gln-223, Thr-238, and Arg-302; these read DEGK and NAGH. The active-site Proton donor is the His-41. Residue 298-304 participates in substrate binding; it reads TTTGRRR. Residues Arg-304, 330 to 332, and 412 to 414 each bind GTP; these read KLD and SLG.

This sequence belongs to the adenylosuccinate synthetase family. In terms of assembly, homodimer. It depends on Mg(2+) as a cofactor.

The protein localises to the cytoplasm. It catalyses the reaction IMP + L-aspartate + GTP = N(6)-(1,2-dicarboxyethyl)-AMP + GDP + phosphate + 2 H(+). It participates in purine metabolism; AMP biosynthesis via de novo pathway; AMP from IMP: step 1/2. In terms of biological role, plays an important role in the de novo pathway of purine nucleotide biosynthesis. Catalyzes the first committed step in the biosynthesis of AMP from IMP. In Crocosphaera subtropica (strain ATCC 51142 / BH68) (Cyanothece sp. (strain ATCC 51142)), this protein is Adenylosuccinate synthetase.